The sequence spans 196 residues: Ribonuclease HII (196 aa).

One can recognise an RNase H type-2 domain in the interval 9-196 (SLIAGVDEVG…APVKRAIGLK (188 aa)). Residues Asp15, Glu16, and Asp107 each contribute to the a divalent metal cation site.

The protein belongs to the RNase HII family. It depends on Mn(2+) as a cofactor. Requires Mg(2+) as cofactor.

The protein localises to the cytoplasm. It carries out the reaction Endonucleolytic cleavage to 5'-phosphomonoester.. Functionally, endonuclease that specifically degrades the RNA of RNA-DNA hybrids. The protein is Ribonuclease HII of Photorhabdus laumondii subsp. laumondii (strain DSM 15139 / CIP 105565 / TT01) (Photorhabdus luminescens subsp. laumondii).